A 245-amino-acid chain; its full sequence is Small ribosomal subunit protein uS2 (245 aa).

The segment at 226 to 245 (GGGANVGEMENPPVEATADA) is disordered.

Belongs to the universal ribosomal protein uS2 family.

This is Small ribosomal subunit protein uS2 from Erythrobacter litoralis (strain HTCC2594).